We begin with the raw amino-acid sequence, 81 residues long: uncharacterized protein (81 aa).

This is an uncharacterized protein from Schizosaccharomyces pombe (strain 972 / ATCC 24843) (Fission yeast).